We begin with the raw amino-acid sequence, 398 residues long: Elongation factor Tu (398 aa).

Residues K10–E207 form the tr-type G domain. A G1 region spans residues G19–T26. GTP is bound at residue G19–T26. T26 contributes to the Mg(2+) binding site. The G2 stretch occupies residues G63 to N67. The G3 stretch occupies residues D84–G87. GTP is bound by residues D84–H88 and N139–D142. Residues N139–D142 form a G4 region. The segment at S177–L179 is G5.

It belongs to the TRAFAC class translation factor GTPase superfamily. Classic translation factor GTPase family. EF-Tu/EF-1A subfamily. In terms of assembly, monomer.

It localises to the cytoplasm. It catalyses the reaction GTP + H2O = GDP + phosphate + H(+). Functionally, GTP hydrolase that promotes the GTP-dependent binding of aminoacyl-tRNA to the A-site of ribosomes during protein biosynthesis. In Streptococcus pyogenes serotype M49 (strain NZ131), this protein is Elongation factor Tu.